The chain runs to 152 residues: Male-specific protein scotti (152 aa).

The protein belongs to the male-specific scotti family.

Functionally, post-meiotically transcribed gene that has a role in late spermiogenesis; required for actin cone progression during spermatid individualization. The protein is Male-specific protein scotti of Drosophila mojavensis (Fruit fly).